The sequence spans 138 residues: Aspartate 1-decarboxylase (138 aa).

The Schiff-base intermediate with substrate; via pyruvic acid role is filled by serine 25. Serine 25 is subject to Pyruvic acid (Ser). Threonine 57 contributes to the substrate binding site. Tyrosine 58 (proton donor) is an active-site residue. 73-75 (GAA) contributes to the substrate binding site. The segment at 116–138 (ELGGDPAQVPDGSGLKNPRHPEA) is disordered.

This sequence belongs to the PanD family. As to quaternary structure, heterooctamer of four alpha and four beta subunits. Requires pyruvate as cofactor. Is synthesized initially as an inactive proenzyme, which is activated by self-cleavage at a specific serine bond to produce a beta-subunit with a hydroxyl group at its C-terminus and an alpha-subunit with a pyruvoyl group at its N-terminus.

It is found in the cytoplasm. It catalyses the reaction L-aspartate + H(+) = beta-alanine + CO2. The protein operates within cofactor biosynthesis; (R)-pantothenate biosynthesis; beta-alanine from L-aspartate: step 1/1. Its function is as follows. Catalyzes the pyruvoyl-dependent decarboxylation of aspartate to produce beta-alanine. This Corynebacterium jeikeium (strain K411) protein is Aspartate 1-decarboxylase.